We begin with the raw amino-acid sequence, 264 residues long: Thymidylate synthase (264 aa).

R21 serves as a coordination point for dUMP. H51 serves as a coordination point for (6R)-5,10-methylene-5,6,7,8-tetrahydrofolate. R126–R127 is a binding site for dUMP. C146 acts as the Nucleophile in catalysis. DUMP contacts are provided by residues R166 to D169, N177, and H207 to Y209. A (6R)-5,10-methylene-5,6,7,8-tetrahydrofolate-binding site is contributed by D169. Residue A263 participates in (6R)-5,10-methylene-5,6,7,8-tetrahydrofolate binding.

It belongs to the thymidylate synthase family. Bacterial-type ThyA subfamily. In terms of assembly, homodimer.

It is found in the cytoplasm. The enzyme catalyses dUMP + (6R)-5,10-methylene-5,6,7,8-tetrahydrofolate = 7,8-dihydrofolate + dTMP. It functions in the pathway pyrimidine metabolism; dTTP biosynthesis. Its function is as follows. Catalyzes the reductive methylation of 2'-deoxyuridine-5'-monophosphate (dUMP) to 2'-deoxythymidine-5'-monophosphate (dTMP) while utilizing 5,10-methylenetetrahydrofolate (mTHF) as the methyl donor and reductant in the reaction, yielding dihydrofolate (DHF) as a by-product. This enzymatic reaction provides an intracellular de novo source of dTMP, an essential precursor for DNA biosynthesis. In Parabacteroides distasonis (strain ATCC 8503 / DSM 20701 / CIP 104284 / JCM 5825 / NCTC 11152), this protein is Thymidylate synthase.